A 101-amino-acid chain; its full sequence is Urease subunit beta (101 aa).

It belongs to the urease beta subunit family. In terms of assembly, heterotrimer of UreA (gamma), UreB (beta) and UreC (alpha) subunits. Three heterotrimers associate to form the active enzyme.

It localises to the cytoplasm. The enzyme catalyses urea + 2 H2O + H(+) = hydrogencarbonate + 2 NH4(+). It participates in nitrogen metabolism; urea degradation; CO(2) and NH(3) from urea (urease route): step 1/1. The sequence is that of Urease subunit beta from Pseudomonas aeruginosa (strain LESB58).